Reading from the N-terminus, the 612-residue chain is ETS-related transcription factor Elf-1 (612 aa).

Phosphoserine is present on residues serine 110, serine 163, serine 167, and serine 168. The span at 156 to 169 (VQETNADSPGASSP) shows a compositional bias: polar residues. A disordered region spans residues 156–199 (VQETNADSPGASSPEQRKRKKGRKTKPPRPDSPTTTPNISVKKK). Positions 172–182 (RKRKKGRKTKP) are enriched in basic residues. Position 187 is a phosphoserine (serine 187). Residue threonine 190 is modified to Phosphothreonine. The segment at residues 208–290 (IYLWEFLLAL…EGQRLVYQFK (83 aa)) is a DNA-binding region (ETS). The tract at residues 300-361 (DDEDPSSSIE…AANPKDPVEV (62 aa)) is disordered. Positions 305–322 (SSSIESSDQSLSSTTASS) are enriched in low complexity. Over residues 323–335 (RNQANRSRVSSSP) the composition is skewed to polar residues. Serine 431 is subject to Phosphoserine. A compositionally biased stretch (basic and acidic residues) spans 562 to 577 (EVEKKAEDDLNEDAEK). A disordered region spans residues 562–586 (EVEKKAEDDLNEDAEKSAQQPQPYV).

It belongs to the ETS family. In terms of assembly, binds to the underphosphorylated form of RB. May interact with other transcription factors in order to regulate specific genes. Interacts with RUNX1. Interacts with SP1; the interaction is inhibited by glycosylation of SP1. Predominantly found in hematopoietic cells. Detected in other cell types such as fibroblasts.

The protein resides in the nucleus. Functionally, transcription factor that activates the LYN and BLK promoters. The polypeptide is ETS-related transcription factor Elf-1 (Elf1) (Mus musculus (Mouse)).